The primary structure comprises 1013 residues: Trehalose monomycolate exporter MmpL3 (1013 aa).

Over 1-14 (MFAWWGRTVYQFRY) the chain is Cytoplasmic. The chain crosses the membrane as a helical span at residues 15–35 (IVIGVMVALCLGGGVYGISLG). The Periplasmic segment spans residues 36-196 (NHVTQSGFYD…KRAEVAAIPL (161 aa)). 40–44 (QSGFY) serves as a coordination point for a 1,2-diacylglycero-3-phosphoethanolamine. 2 helical membrane passes run 197–217 (VAVVLFFVFGTVIAAALPAII) and 218–238 (GGLAIAGALGIMRLVAEFTPV). The Periplasmic segment spans residues 239–240 (HF). The chain crosses the membrane as a helical span at residues 241 to 261 (FAQPVVTLIGLGIAIDYGLFI). At 262 to 290 (VSRFREEIAEGYDTEAAVRRTVMTSGRTV) the chain is on the cytoplasmic side. A helical membrane pass occupies residues 291–311 (VFSAVIIVASSVPLLLFPQGF). The Periplasmic portion of the chain corresponds to 312 to 317 (LKSITY). The helical transmembrane segment at 318 to 338 (AIIASVMLAAILSITVLAAAL) threads the bilayer. At 339-401 (AILGPRVDAL…RLVNVVMKRP (63 aa)) the chain is on the cytoplasmic side. Residues 402 to 422 (IAFAAPILVVMVLLIIPLGQL) form a helical membrane-spanning segment. Topologically, residues 423-567 (SLGGISEKYL…HSLFDKLPLM (145 aa)) are periplasmic. Residues 485-513 (SGFTDPDNDPEKMWKERPANDSGSKDPSV) are disordered. Over residues 493–512 (DPEKMWKERPANDSGSKDPS) the composition is skewed to basic and acidic residues. Residues 568–588 (ALILIVTTTVLMFLAFGSVVL) traverse the membrane as a helical segment. Residues 589-591 (PIK) lie on the Cytoplasmic side of the membrane. A helical transmembrane segment spans residues 592 to 612 (AALMSALTLGSTMGILTWMFV). The Periplasmic segment spans residues 613–630 (DGHGSGLMNYTPQPLMAP). The chain crosses the membrane as a helical span at residues 631-651 (MIGLIIAVIWGLSTDYEVFLV). Residue aspartate 645 coordinates SQ109. Over 652–678 (SRMVEARERGMSTAEAIRIGTATTGRL) the chain is Cytoplasmic. The chain crosses the membrane as a helical span at residues 679-699 (ITGAALILAVVAGAFVFSDLV). At 700 to 703 (MMKY) the chain is on the periplasmic side. A helical transmembrane segment spans residues 704 to 724 (LAFGLLIALLLDATIIRMFLV). The Cytoplasmic portion of the chain corresponds to 725–1013 (PAVMKLLGDD…QDLLRREGRL (289 aa)). The segment at 754 to 1013 (TELPDERKRP…QDLLRREGRL (260 aa)) is disordered. Residues 757–772 (PDERKRPTVRESETDQ) show a composition bias toward basic and acidic residues. Pro residues-rich tracts occupy residues 792-803 (HPAPEPVRPMPP) and 820-829 (PPQPPQPPQA). Residues 842–867 (RFAMARNAVRNAVNSAVHGGAGSAAA) are compositionally biased toward low complexity. Residues 875–885 (PGGPAQPPAPP) are compositionally biased toward pro residues. Over residues 973–996 (REQEPSTEKLNTREDAPEDPETKR) the composition is skewed to basic and acidic residues.

The protein belongs to the resistance-nodulation-cell division (RND) (TC 2.A.6) family. MmpL subfamily. In terms of assembly, monomer. Interacts with TtfA (via N-terminus); active trehalose monomycolate (TMM) biosynthesis is not required for the complex formation. Interacts with MSMEG_5308.

Its subcellular location is the cell inner membrane. The protein resides in the cell septum. It localises to the cell tip. Inhibited by the antimycobacterial compound BM212, a pyrrole derivative. Inhibited by the antitubercular drug SQ109. Inhibited by the adamantyl urea derivative AU1235, the indole carboxamide ICA38 and rimonabant, the antagonist for the cannabinoid receptor CB1. The dissociation constant (Kd) values for SQ109, AU1235, ICA38 and rimonabant are 1.65 uM, 0.29, 0.16 and 29.5, respectively. Inhibitory effects are due to binding of the inhibitors at the proton-transportation channel most likely dissipating the transmembrane electrochemical proton gradient needed for substrate translocation. Its function is as follows. Transports trehalose monomycolate (TMM) to the cell wall. Flips TMM across the inner membrane. Membrane potential is not required for this function. Transports probably phosphatidylethanolamine (PE) as well. Binds specifically both TMM and PE, but not trehalose dimycolate (TDM). Also binds diacylglycerol (DAG) and other phospholipids, including phosphatidylglycerol (PG), phosphatidylinositol (PI), and cardiolipin (CDL). Contributes to membrane potential, cell wall composition, antibiotic susceptibility and fitness. This chain is Trehalose monomycolate exporter MmpL3, found in Mycolicibacterium smegmatis (strain ATCC 700084 / mc(2)155) (Mycobacterium smegmatis).